The sequence spans 719 residues: MSSLPHNHHYETHHRGTAEVPFDELIGVTPDGVPVISNGNEAHFSNLESITAACLPLSSFERKAPCKQPYRKMGVKWQCVEFVRRYLASRKAVWMTSLCTAEEVWREENLFVDVRDGRPVEVVRTPNKSTGPAPAVADIVVWGEGPETPFGHVAIVTEVCASCVRVAEQNQGFEKWPEDVPFSREIAMRTTESGEVELLDEDPLLGWVTVQAPFYNFDDGDLADSFRLVVGQGQILRQPFPKHVDVPWLNTGEECDTILKHSLVVDGNMGEGAHAEEGDVPGAFYFLDYDMFCRLGRAASSLHRIAMAATAKVLEDPESTHLLEHYFGVPPEIQPLLRRSWEMTPPMGGRFDFGYDGKNVVMLEYNCDSSGALLECCNTQEKMARFYGVSQGTSTGSFLGAKCVTYFQRLLTNEKVCPQHRLIHFMIDEDDEERYTARCMMGFAEQAGFRTKLCVKLVNFRYRDGPPSNAAPLATPCDHPTIVDGEDEEVLMVWKTWSWDTVLHQYHSQRSSSDAVNTPTLSDILLNNNIRVLEPLWKAVTGSKAILPFMHALAPDHEHMLAASFLPTREIISRHYISKPVNGRAGQNIMMYDPVTSPTELEGAPQQDICEALSQNASARSLLNGSPLPLSQSVDQTNECSPGKFFDSVLVYQQRLFLKKFDGKYFPIFCGWMVGDEFGGVVVREDTSKITKLSSMVVPARVVRDNVPLGVSYSDEGET.

A Peptidase C51 domain is found at 54-200 (CLPLSSFERK…TESGEVELLD (147 aa)). Residue R350 coordinates glutathione. 350–352 (RFD) is an ATP binding site. Mg(2+) is bound by residues D352, E364, and N366. S369 is a binding site for glutathione. A spermidine-binding site is contributed by E432. E433 and T501 together coordinate glutathione. ATP is bound by residues K544, K579, G586, Q653, and 689-691 (KIT).

In the C-terminal section; belongs to the glutathionylspermidine synthase preATP-grasp family. Mg(2+) is required as a cofactor. The N-terminus is blocked.

It catalyses the reaction spermidine + glutathione + ATP = glutathionylspermidine + ADP + phosphate + H(+). Functionally, conjugates glutathione (gamma-Glu-Cys-Gly) and spermidine to form glutathionylspermidine in the biosynthesis trypanothione (N(1),N(8)-bis(glutathionyl)spermidine), which is involved in maintaining intracellular thiol redox and in defense against oxidants. The polypeptide is Glutathionylspermidine synthase (GSP) (Crithidia fasciculata).